The following is a 297-amino-acid chain: tRNA pseudouridine synthase A (297 aa).

The active-site Nucleophile is the Asp-72. A substrate-binding site is contributed by Tyr-144.

It belongs to the tRNA pseudouridine synthase TruA family. Homodimer.

It carries out the reaction uridine(38/39/40) in tRNA = pseudouridine(38/39/40) in tRNA. In terms of biological role, formation of pseudouridine at positions 38, 39 and 40 in the anticodon stem and loop of transfer RNAs. In Mycobacterium bovis (strain ATCC BAA-935 / AF2122/97), this protein is tRNA pseudouridine synthase A.